Here is a 140-residue protein sequence, read N- to C-terminus: 3-hydroxyacyl-[acyl-carrier-protein] dehydratase FabZ (140 aa).

Histidine 47 is a catalytic residue.

The protein belongs to the thioester dehydratase family. FabZ subfamily.

It localises to the cytoplasm. It catalyses the reaction a (3R)-hydroxyacyl-[ACP] = a (2E)-enoyl-[ACP] + H2O. Its function is as follows. Involved in unsaturated fatty acids biosynthesis. Catalyzes the dehydration of short chain beta-hydroxyacyl-ACPs and long chain saturated and unsaturated beta-hydroxyacyl-ACPs. In Streptococcus uberis (strain ATCC BAA-854 / 0140J), this protein is 3-hydroxyacyl-[acyl-carrier-protein] dehydratase FabZ.